Here is a 176-residue protein sequence, read N- to C-terminus: Co-chaperone protein HscB homolog (176 aa).

Residues 8 to 80 (DFFALFGLPV…LRRATYLLKL (73 aa)) form the J domain.

This sequence belongs to the HscB family. As to quaternary structure, interacts with HscA and stimulates its ATPase activity.

Its function is as follows. Co-chaperone involved in the maturation of iron-sulfur cluster-containing proteins. Seems to help targeting proteins to be folded toward HscA. This is Co-chaperone protein HscB homolog from Cupriavidus taiwanensis (strain DSM 17343 / BCRC 17206 / CCUG 44338 / CIP 107171 / LMG 19424 / R1) (Ralstonia taiwanensis (strain LMG 19424)).